A 159-amino-acid polypeptide reads, in one-letter code: ATP synthase subunit b 2 (159 aa).

Residues 1-21 (MDATFWALIGLIIFLAILAYL) form a helical membrane-spanning segment.

Belongs to the ATPase B chain family. As to quaternary structure, F-type ATPases have 2 components, F(1) - the catalytic core - and F(0) - the membrane proton channel. F(1) has five subunits: alpha(3), beta(3), gamma(1), delta(1), epsilon(1). F(0) has three main subunits: a(1), b(2) and c(10-14). The alpha and beta chains form an alternating ring which encloses part of the gamma chain. F(1) is attached to F(0) by a central stalk formed by the gamma and epsilon chains, while a peripheral stalk is formed by the delta and b chains.

Its subcellular location is the cell inner membrane. Functionally, f(1)F(0) ATP synthase produces ATP from ADP in the presence of a proton or sodium gradient. F-type ATPases consist of two structural domains, F(1) containing the extramembraneous catalytic core and F(0) containing the membrane proton channel, linked together by a central stalk and a peripheral stalk. During catalysis, ATP synthesis in the catalytic domain of F(1) is coupled via a rotary mechanism of the central stalk subunits to proton translocation. In terms of biological role, component of the F(0) channel, it forms part of the peripheral stalk, linking F(1) to F(0). This chain is ATP synthase subunit b 2, found in Brucella anthropi (strain ATCC 49188 / DSM 6882 / CCUG 24695 / JCM 21032 / LMG 3331 / NBRC 15819 / NCTC 12168 / Alc 37) (Ochrobactrum anthropi).